Reading from the N-terminus, the 534-residue chain is Protein tweety homolog 2 (534 aa).

Over M1–T44 the chain is Extracellular. A helical membrane pass occupies residues L45–V65. Residues Y66–C87 are Cytoplasmic-facing. The helical transmembrane segment at C88–F108 threads the bilayer. Topologically, residues Y109–W213 are extracellular. Positions 113 and 116 each coordinate Ca(2+). N129 carries an N-linked (GlcNAc...) asparagine glycan. The RGD motif lies at R164 to D166. N197 carries an N-linked (GlcNAc...) asparagine glycan. Residues L214–L234 form a helical membrane-spanning segment. At A235–C240 the chain is on the cytoplasmic side. A helical transmembrane segment spans residues L241–A261. Over L262–G388 the chain is Extracellular. 2 disulfide bridges follow: C274–C382 and C300–C367. 2 N-linked (GlcNAc...) asparagine glycosylation sites follow: N283 and N352. A helical membrane pass occupies residues M389–A409. Over M410–A534 the chain is Cytoplasmic.

This sequence belongs to the tweety family. In terms of assembly, forms cis-homodimers in the presence of Ca(+2) and forms monomers and trans-dimers in the absence of Ca(2+).

The protein resides in the cell membrane. It catalyses the reaction chloride(in) = chloride(out). The catalysed reaction is L-glutamate(out) = L-glutamate(in). Its function is as follows. May act as a calcium-independent, swelling-dependent volume-regulated anion channel (VRAC-swell) which plays a pivotal role in the process of regulatory volume decrease (RVD) in the brain through the efflux of anions like chloride and organic osmolytes like glutamate. Probable large-conductance Ca(2+)-activated chloride channel. The sequence is that of Protein tweety homolog 2 (ttyh2) from Xenopus tropicalis (Western clawed frog).